Here is a 281-residue protein sequence, read N- to C-terminus: 2-dehydro-3-deoxyphosphooctonate aldolase (281 aa).

This sequence belongs to the KdsA family.

It is found in the cytoplasm. The catalysed reaction is D-arabinose 5-phosphate + phosphoenolpyruvate + H2O = 3-deoxy-alpha-D-manno-2-octulosonate-8-phosphate + phosphate. It functions in the pathway carbohydrate biosynthesis; 3-deoxy-D-manno-octulosonate biosynthesis; 3-deoxy-D-manno-octulosonate from D-ribulose 5-phosphate: step 2/3. It participates in bacterial outer membrane biogenesis; lipopolysaccharide biosynthesis. In Pseudomonas aeruginosa (strain UCBPP-PA14), this protein is 2-dehydro-3-deoxyphosphooctonate aldolase.